The primary structure comprises 1009 residues: DNA ligase 3 (1009 aa).

Residues 1–42 (MSLAFKIFFPQTLRALSRKELCLFRKHHWRDVRQFSQWSETD) constitute a mitochondrion transit peptide. Residues 93 to 185 (FCVDYAKRGT…QITQHIADLS (93 aa)) form a PARP-type zinc finger. Zn(2+)-binding residues include Cys-105, Cys-108, His-139, and Cys-142. Residues Ser-210, Ser-216, Ser-227, and Ser-242 each carry the phosphoserine modification. The disordered stretch occupies residues 224–256 (RKFSGFSAKPNNSGEAPSSPTPKRSLSSSKCDP). Low complexity predominate over residues 240–252 (PSSPTPKRSLSSS). 4 interaction with DNA regions span residues 277–280 (PSYN), 318–323 (VYNLND), 388–391 (TKED), and 421–427 (KMNSGAK). Glu-506 provides a ligand contact to ATP. Catalysis depends on Lys-508, which acts as the N6-AMP-lysine intermediate. Arg-513 and Arg-528 together coordinate ATP. Mg(2+) contacts are provided by Glu-560 and Glu-655. ATP contacts are provided by Lys-660, Arg-671, and Lys-675. Positions 842 to 917 (AGDEGSSTTG…LATKSSPVKV (76 aa)) are disordered. Composition is skewed to low complexity over residues 845–854 (EGSSTTGGSS) and 863–877 (SAVS…SAST). Over residues 884 to 898 (LSNSNSKDGNMQTAK) the composition is skewed to polar residues. Ser-913 carries the post-translational modification Phosphoserine. Positions 933–1009 (VLLDIFTGVR…IRKRRLVAPC (77 aa)) constitute a BRCT domain.

Belongs to the ATP-dependent DNA ligase family. As to quaternary structure, isoform 3 interacts (via BRCT domain) with the nuclear DNA-repair protein XRCC1. Interacts with POLG. Interacts with POLB. Mg(2+) is required as a cofactor. In terms of tissue distribution, testis, thymus, prostate and heart.

It localises to the mitochondrion. The protein localises to the nucleus. It carries out the reaction ATP + (deoxyribonucleotide)n-3'-hydroxyl + 5'-phospho-(deoxyribonucleotide)m = (deoxyribonucleotide)n+m + AMP + diphosphate.. In terms of biological role, isoform 3 functions as a heterodimer with DNA-repair protein XRCC1 in the nucleus and can correct defective DNA strand-break repair and sister chromatid exchange following treatment with ionizing radiation and alkylating agents. Isoform 1 is targeted to mitochondria, where it functions as a DNA ligase in mitochondrial base-excision DNA repair. The chain is DNA ligase 3 (LIG3) from Homo sapiens (Human).